Consider the following 104-residue polypeptide: Large ribosomal subunit protein uL24 (104 aa).

The segment covering 85-96 (IKRELGAKEKAR) has biased composition (basic and acidic residues). A disordered region spans residues 85-104 (IKRELGAKEKARADRRKTAK).

It belongs to the universal ribosomal protein uL24 family. As to quaternary structure, part of the 50S ribosomal subunit.

Its function is as follows. One of two assembly initiator proteins, it binds directly to the 5'-end of the 23S rRNA, where it nucleates assembly of the 50S subunit. Functionally, one of the proteins that surrounds the polypeptide exit tunnel on the outside of the subunit. In Anaeromyxobacter sp. (strain Fw109-5), this protein is Large ribosomal subunit protein uL24.